The primary structure comprises 313 residues: Protein PHOSPHATE-INDUCED 1 (313 aa).

The first 22 residues, 1–22 (MATSHFILKLFLVISFCNVCFA), serve as a signal peptide directing secretion. Asparagine 119 carries an N-linked (GlcNAc...) asparagine glycan.

It belongs to the EXORDIUM family.

The protein localises to the secreted. Its subcellular location is the extracellular space. The protein resides in the apoplast. Functionally, may be involved in the regulation of cell division. In Nicotiana tabacum (Common tobacco), this protein is Protein PHOSPHATE-INDUCED 1.